The chain runs to 314 residues: Acetaldehyde dehydrogenase 1 (314 aa).

NAD(+) is bound at residue 16 to 19 (SGNI). The Acyl-thioester intermediate role is filled by Cys134. Residues 165–173 (SAGPGTRAN) and Asn292 each bind NAD(+).

Belongs to the acetaldehyde dehydrogenase family.

The enzyme catalyses acetaldehyde + NAD(+) + CoA = acetyl-CoA + NADH + H(+). In Cupriavidus necator (strain ATCC 17699 / DSM 428 / KCTC 22496 / NCIMB 10442 / H16 / Stanier 337) (Ralstonia eutropha), this protein is Acetaldehyde dehydrogenase 1 (mhpF).